The sequence spans 75 residues: Cytochrome c oxidase subunit 6C (75 aa).

Over 1–13 (MAPEVLPKPQMRG) the chain is Mitochondrial matrix. Residues 14 to 54 (LLAKRLRFHMVTAFVLSLGVAALYKFRVADKRKKAYADFYR) traverse the membrane as a helical segment. The Mitochondrial intermembrane segment spans residues 55–75 (NYDAMKDFEEMRKAGIFQSVK).

This sequence belongs to the cytochrome c oxidase subunit 6c family. As to quaternary structure, component of the cytochrome c oxidase (complex IV, CIV), a multisubunit enzyme composed of 14 subunits. The complex is composed of a catalytic core of 3 subunits MT-CO1, MT-CO2 and MT-CO3, encoded in the mitochondrial DNA, and 11 supernumerary subunits COX4I, COX5A, COX5B, COX6A, COX6B, COX6C, COX7A, COX7B, COX7C, COX8 and NDUFA4, which are encoded in the nuclear genome. The complex exists as a monomer or a dimer and forms supercomplexes (SCs) in the inner mitochondrial membrane with NADH-ubiquinone oxidoreductase (complex I, CI) and ubiquinol-cytochrome c oxidoreductase (cytochrome b-c1 complex, complex III, CIII), resulting in different assemblies (supercomplex SCI(1)III(2)IV(1) and megacomplex MCI(2)III(2)IV(2)).

The protein localises to the mitochondrion inner membrane. It functions in the pathway energy metabolism; oxidative phosphorylation. Its function is as follows. Component of the cytochrome c oxidase, the last enzyme in the mitochondrial electron transport chain which drives oxidative phosphorylation. The respiratory chain contains 3 multisubunit complexes succinate dehydrogenase (complex II, CII), ubiquinol-cytochrome c oxidoreductase (cytochrome b-c1 complex, complex III, CIII) and cytochrome c oxidase (complex IV, CIV), that cooperate to transfer electrons derived from NADH and succinate to molecular oxygen, creating an electrochemical gradient over the inner membrane that drives transmembrane transport and the ATP synthase. Cytochrome c oxidase is the component of the respiratory chain that catalyzes the reduction of oxygen to water. Electrons originating from reduced cytochrome c in the intermembrane space (IMS) are transferred via the dinuclear copper A center (CU(A)) of subunit 2 and heme A of subunit 1 to the active site in subunit 1, a binuclear center (BNC) formed by heme A3 and copper B (CU(B)). The BNC reduces molecular oxygen to 2 water molecules using 4 electrons from cytochrome c in the IMS and 4 protons from the mitochondrial matrix. The protein is Cytochrome c oxidase subunit 6C (COX6C) of Trachypithecus cristatus (Silvered leaf-monkey).